Reading from the N-terminus, the 392-residue chain is Phospho-N-acetylmuramoyl-pentapeptide-transferase (392 aa).

A run of 10 helical transmembrane segments spans residues 29–49 (AVLAALTALLIGLAAGSWVIG), 76–96 (TMGGVLILLSIALSTLLWFDL), 100–120 (FVWIVLLVTLGFGAIGWVDDW), 137–157 (YLWQSLIGLMAALYLVFCISE), 192–212 (AVSYPLGVLGFVLLTYLVIVG), 225–245 (GLAIMPVVMVGSALGVFAYVT), 262–282 (SGELLIFCAAMAGAGLAFLWF), 289–309 (VFMGDVGALALGAALGTIAII), 314–334 (IVLAVMGGIFVAEALSVMLQV), and 369–389 (QVVVRFWIITMLLCLVGLSTL).

Belongs to the glycosyltransferase 4 family. MraY subfamily. Requires Mg(2+) as cofactor.

It is found in the cell inner membrane. It carries out the reaction UDP-N-acetyl-alpha-D-muramoyl-L-alanyl-gamma-D-glutamyl-meso-2,6-diaminopimeloyl-D-alanyl-D-alanine + di-trans,octa-cis-undecaprenyl phosphate = di-trans,octa-cis-undecaprenyl diphospho-N-acetyl-alpha-D-muramoyl-L-alanyl-D-glutamyl-meso-2,6-diaminopimeloyl-D-alanyl-D-alanine + UMP. It participates in cell wall biogenesis; peptidoglycan biosynthesis. Its function is as follows. Catalyzes the initial step of the lipid cycle reactions in the biosynthesis of the cell wall peptidoglycan: transfers peptidoglycan precursor phospho-MurNAc-pentapeptide from UDP-MurNAc-pentapeptide onto the lipid carrier undecaprenyl phosphate, yielding undecaprenyl-pyrophosphoryl-MurNAc-pentapeptide, known as lipid I. This Verminephrobacter eiseniae (strain EF01-2) protein is Phospho-N-acetylmuramoyl-pentapeptide-transferase.